The chain runs to 307 residues: Dihydroorotate dehydrogenase B (NAD(+)), catalytic subunit (307 aa).

FMN is bound by residues serine 22 and 46–47 (KT). Residues lysine 46, 70-74 (NAVGL), and asparagine 128 each bind substrate. An FMN-binding site is contributed by asparagine 128. Catalysis depends on cysteine 131, which acts as the Nucleophile. Lysine 166 and isoleucine 192 together coordinate FMN. Substrate is bound at residue 193–194 (NT). Residues glycine 218, 244-245 (GG), and 266-267 (GT) contribute to the FMN site.

The protein belongs to the dihydroorotate dehydrogenase family. Type 1 subfamily. In terms of assembly, heterotetramer of 2 PyrK and 2 PyrD type B subunits. The cofactor is FMN.

The protein localises to the cytoplasm. It catalyses the reaction (S)-dihydroorotate + NAD(+) = orotate + NADH + H(+). Its pathway is pyrimidine metabolism; UMP biosynthesis via de novo pathway; orotate from (S)-dihydroorotate (NAD(+) route): step 1/1. Catalyzes the conversion of dihydroorotate to orotate with NAD(+) as electron acceptor. This is Dihydroorotate dehydrogenase B (NAD(+)), catalytic subunit (pyrD) from Desulforudis audaxviator (strain MP104C).